Consider the following 562-residue polypeptide: Bacillolysin (562 aa).

The N-terminal stretch at 1–24 is a signal peptide; that stretch reads MKKKKQALKVLLSVGILSSSFAFA. The propeptide at 25 to 245 is activation peptide; that stretch reads HTSSAAPNNV…KQAAKPAAKP (221 aa). Residues aspartate 303, aspartate 305, and aspartate 384 each contribute to the Ca(2+) site. Histidine 388 is a Zn(2+) binding site. Residue glutamate 389 is part of the active site. Zn(2+) contacts are provided by histidine 392 and glutamate 412. Ca(2+) is bound by residues glutamate 423, asparagine 429, aspartate 431, glutamate 433, glutamate 436, tyrosine 439, threonine 440, and aspartate 446. Histidine 477 functions as the Proton donor in the catalytic mechanism.

This sequence belongs to the peptidase M4 family. Ca(2+) serves as cofactor. The cofactor is Zn(2+).

Its subcellular location is the secreted. It carries out the reaction Similar, but not identical, to that of thermolysin.. Extracellular zinc metalloprotease. This chain is Bacillolysin (nprM), found in Priestia megaterium (strain DSM 319 / IMG 1521) (Bacillus megaterium).